Consider the following 281-residue polypeptide: E2F-associated phosphoprotein (281 aa).

An N-acetylmethionine modification is found at Met-1. Residues 1–27 (MNRLQDDYDPYAVEEPSDEEPALSSSE) are disordered. A compositionally biased stretch (acidic residues) spans 15 to 27 (EPSDEEPALSSSE). Phosphoserine is present on Ser-17. Thr-37 is modified (phosphothreonine). 2 positions are modified to phosphoserine: Ser-109 and Ser-111. The segment at 222-245 (PENRRKRRSAKKMRSNPEDPAERE) is disordered. Positions 225–235 (RRKRRSAKKMR) are enriched in basic residues. Basic and acidic residues predominate over residues 236-245 (SNPEDPAERE).

Interacts with E2F1. The C-terminal half binds the N-terminal of E2F1. Also interacts with E2F2 and E2F3, but not E2F4.

Its subcellular location is the cytoplasm. The protein localises to the nucleus. Functionally, may play an important role in the fine-tuning of both major E2F1 activities, the regulation of the cell-cycle and the induction of apoptosis. Promotes S-phase entry, and inhibits p14(ARP) expression. This chain is E2F-associated phosphoprotein (Eapp), found in Mus musculus (Mouse).